The following is a 395-amino-acid chain: Zinc-regulated GTPase metalloprotein activator 1A (395 aa).

A disordered region spans residues 1-22; that stretch reads MLPAVGSADEEEDPAEEDCPEL. Residues 8–20 are compositionally biased toward acidic residues; it reads ADEEEDPAEEDCP. The short motif at 17–24 is the psi-PxLVp motif element; it reads EDCPELVP. 49-56 serves as a coordination point for GTP; the sequence is GYLGAGKT. 3 residues coordinate Zn(2+): C107, C109, and C110. A CXCC motif motif is present at residues 107–110; the sequence is CLCC. Residues 110–114 and 203–206 contribute to the GTP site; these read CSVKD and NKTD. In terms of domain architecture, CobW C-terminal spans 274–377; sequence IVTITFEVPG…ILKQLFIATV (104 aa).

Belongs to the SIMIBI class G3E GTPase family. ZNG1 subfamily. Ubiquitously expressed. Up-regulated in cultured astrocytes treated with dopamine.

It localises to the nucleus. It catalyses the reaction GTP + H2O = GDP + phosphate + H(+). Zinc chaperone that directly transfers zinc cofactor to target metalloproteins, thereby activating them. Catalyzes zinc insertion into the active site of methionine aminopeptidase METAP1, which function to cleave the initiator methionine from polypeptides during or after protein translation. Mechanistically, the N-terminal psi-PxLVp motif binds to the C6H2-type zinc finger of inactive form of METAP1. After formation of the docked complex, zinc is transferred from the CXCC motif in the GTPase domain of ZNG1A to the zinc binding site in the peptidase domain of METAP1 in a process requiring GTP hydrolysis. GTP/GDP exchange is required for release of active METAP1. This chain is Zinc-regulated GTPase metalloprotein activator 1A, found in Homo sapiens (Human).